The following is a 1024-amino-acid chain: Beta-galactosidase (1024 aa).

Substrate contacts are provided by N103 and D202. D202 contributes to the Na(+) binding site. Residues E417, H419, and E462 each contribute to the Mg(2+) site. Residues E462 and 538 to 541 contribute to the substrate site; that span reads EYAH. The active-site Proton donor is E462. The active-site Nucleophile is the E538. Mg(2+) is bound at residue N598. Na(+)-binding residues include F602 and N605. Residues N605 and W1000 each contribute to the substrate site.

The protein belongs to the glycosyl hydrolase 2 family. As to quaternary structure, homotetramer. Mg(2+) serves as cofactor. The cofactor is Na(+).

The enzyme catalyses Hydrolysis of terminal non-reducing beta-D-galactose residues in beta-D-galactosides.. The sequence is that of Beta-galactosidase from Escherichia coli O1:K1 / APEC.